The following is a 95-amino-acid chain: Acylphosphatase 2 (95 aa).

The region spanning 6–93 is the Acylphosphatase-like domain; sequence RVIVTVQGRV…PLPPGFEVRP (88 aa). Catalysis depends on residues R21 and N39.

It belongs to the acylphosphatase family.

It carries out the reaction an acyl phosphate + H2O = a carboxylate + phosphate + H(+). This is Acylphosphatase 2 (acyP2) from Ralstonia nicotianae (strain ATCC BAA-1114 / GMI1000) (Ralstonia solanacearum).